Here is a 333-residue protein sequence, read N- to C-terminus: tRNA-modifying protein YgfZ (333 aa).

Folate-binding residues include Trp33 and Trp195.

The protein belongs to the tRNA-modifying YgfZ family.

The protein resides in the cytoplasm. Folate-binding protein involved in regulating the level of ATP-DnaA and in the modification of some tRNAs. It is probably a key factor in regulatory networks that act via tRNA modification, such as initiation of chromosomal replication. This is tRNA-modifying protein YgfZ from Pectobacterium atrosepticum (strain SCRI 1043 / ATCC BAA-672) (Erwinia carotovora subsp. atroseptica).